The primary structure comprises 215 residues: Glutathione S-transferase stcT (215 aa).

The 81-residue stretch at 2–82 (PFGTLYTRPF…YDSNTTLLGT (81 aa)) folds into the GST N-terminal domain. Glutathione is bound by residues Lys52 and Glu66. Lys52 contributes to the substrate binding site. A GST C-terminal domain is found at 83-211 (TGQEYASIIR…PVLAEYEMPI (129 aa)).

This sequence belongs to the GST superfamily. Glutathione serves as cofactor.

It participates in mycotoxin biosynthesis; sterigmatocystin biosynthesis. Functionally, glutathione S-transferase; part of the gene cluster that mediates the biosynthesis of sterigmatocystin (ST), a polyketide-derived furanocoumarin which is part of the most toxic and carcinogenic compounds among the known mycotoxins. The first step in the biosynthesis of sterigmatocystin is the production of hexanoate by the fatty acid synthase (FAS) units stcJ and stcK. The polyketide backbone is assembled by the non-reducing polyketide synthase stcA by condensation of the starter hexanoyl-CoA and 7 malonyl-CoA extender units followed by cyclization and release of norsolorinic acid. Norsolorinic acid is the first stable intermediate in the biosynthesis of sterigmatocystin and is converted into averantin (AVN) by the ketoreductase stcE which reduces the hexanoate ketone to an alcohol. Averantin is then oxidized into 5'-hydroxyaverantin (HAVN) by the cytochrome P450 monooxygenase stcF. 5'-hydroxyaverantin is further converted to 5'-oxyaverantin (OAVN) by the 5'-hydroxyaverantin dehydrogenase stcG. The next step is the conversion of OAVN into averufin (AVF) which is catalyzed by a yet to be identified enzyme. The cytochrome P450 monooxygenase stcB and the flavin-binding monooxygenase stcW are both required for the conversion of averufin to 1-hydroxyversicolorone. The esterase stcI probably catalyzes the formation of versiconal hemiacetal acetate from 1-hydroxyversicolorone. The oxydoreductase stcN then probably catalyzes the biosynthetic step from versiconal to versicolorin B (VERB). The next step is performed by the versicolorin B desaturase stcL to produce versicolorin A (VERA). The ketoreductase stcU and the cytochrome P450 monooxygenase stcS are involved in the conversion of versicolorin A to demethylsterigmatocystin. The Baeyer-Villiger oxidas stcQ and the reductase stcR might be involved in the biosynthetic step from versicolorin A to demethylsterigmatocystin. The final step in the biosynthesis of sterigmatocystin is the methylation of demethylsterigmatocystin catalyzed by the methyltransferase stcP. The protein is Glutathione S-transferase stcT of Emericella nidulans (strain FGSC A4 / ATCC 38163 / CBS 112.46 / NRRL 194 / M139) (Aspergillus nidulans).